The sequence spans 400 residues: Calsequestrin-2 (400 aa).

The first 19 residues, 1 to 19 (MKRTHLFIVGVYVLSSCRA), serve as a signal peptide directing secretion. A Phosphotyrosine modification is found at Tyr282. Asn335 carries N-linked (GlcNAc...) asparagine glycosylation. Residues 365–400 (VLSGKINTEDDDDEDDDDDNSDEEDNDDSDDDDDDE) are disordered. Acidic residues predominate over residues 373 to 400 (EDDDDEDDDDDNSDEEDNDDSDDDDDDE).

It belongs to the calsequestrin family. In terms of assembly, monomer, homodimer and homooligomer. Mostly monomeric in the absence of calcium. Forms higher oligomers in a calcium-dependent manner. Dimers associate to form tetramers, that then form linear homomer chains. Interacts with ASPH and TRDN. Phosphorylation in the C-terminus, probably by CK2, moderately increases calcium buffering capacity. In terms of processing, N-glycosylated.

Its subcellular location is the sarcoplasmic reticulum lumen. Its function is as follows. Calsequestrin is a high-capacity, moderate affinity, calcium-binding protein and thus acts as an internal calcium store in muscle. Calcium ions are bound by clusters of acidic residues at the protein surface, especially at the interface between subunits. Can bind around 60 Ca(2+) ions. Regulates the release of lumenal Ca(2+) via the calcium release channel RYR2; this plays an important role in triggering muscle contraction. Plays a role in excitation-contraction coupling in the heart and in regulating the rate of heart beats. The polypeptide is Calsequestrin-2 (CASQ2) (Pongo abelii (Sumatran orangutan)).